Consider the following 96-residue polypeptide: Carboxysome shell protein CsoS1A (96 aa).

In terms of domain architecture, BMC spans 7-92 (ALGMIETRGL…PHKEVEPVLT (86 aa)).

It belongs to the bacterial microcompartments protein family. CsoS1 subfamily. Homohexamer with a small central pore. Forms a CsoS2-CsoS1-RuBisCO complex.

The protein localises to the carboxysome. One of shell proteins of the carboxysome, a polyhedral inclusion where RuBisCO (ribulose bisphosphate carboxylase, ccbL-ccbS) is sequestered. Assembles into hexamers which make sheets that form the facets of the polyhedral carboxysome. The shell probably limits the diffusion of CO(2) into and out of the carboxysome. This is Carboxysome shell protein CsoS1A from Hydrogenovibrio crunogenus (strain DSM 25203 / XCL-2) (Thiomicrospira crunogena).